A 387-amino-acid polypeptide reads, in one-letter code: Succinyl-diaminopimelate desuccinylase (387 aa).

Zn(2+) is bound at residue His-74. Asp-76 is an active-site residue. Asp-107 contributes to the Zn(2+) binding site. Glu-142 functions as the Proton acceptor in the catalytic mechanism. Positions 143, 171, and 360 each coordinate Zn(2+).

It belongs to the peptidase M20A family. DapE subfamily. Homodimer. Zn(2+) is required as a cofactor. Co(2+) serves as cofactor.

The enzyme catalyses N-succinyl-(2S,6S)-2,6-diaminopimelate + H2O = (2S,6S)-2,6-diaminopimelate + succinate. It functions in the pathway amino-acid biosynthesis; L-lysine biosynthesis via DAP pathway; LL-2,6-diaminopimelate from (S)-tetrahydrodipicolinate (succinylase route): step 3/3. Functionally, catalyzes the hydrolysis of N-succinyl-L,L-diaminopimelic acid (SDAP), forming succinate and LL-2,6-diaminopimelate (DAP), an intermediate involved in the bacterial biosynthesis of lysine and meso-diaminopimelic acid, an essential component of bacterial cell walls. The chain is Succinyl-diaminopimelate desuccinylase from Rhodopseudomonas palustris (strain TIE-1).